We begin with the raw amino-acid sequence, 252 residues long: Small ribosomal subunit protein eS1A (252 aa).

N-acetylalanine; partial is present on A2.

It belongs to the eukaryotic ribosomal protein eS1 family. In terms of assembly, component of the small ribosomal subunit (SSU). Mature yeast ribosomes consist of a small (40S) and a large (60S) subunit. The 40S small subunit contains 1 molecule of ribosomal RNA (18S rRNA) and at least 33 different proteins. The large 60S subunit contains 3 rRNA molecules (25S, 5.8S and 5S rRNA) and at least 46 different proteins. eS1 interacts directly with uS11 and eS26, which form part of the mRNA exit tunnel.

The protein localises to the cytoplasm. In terms of biological role, component of the ribosome, a large ribonucleoprotein complex responsible for the synthesis of proteins in the cell. The small ribosomal subunit (SSU) binds messenger RNAs (mRNAs) and translates the encoded message by selecting cognate aminoacyl-transfer RNA (tRNA) molecules. The large subunit (LSU) contains the ribosomal catalytic site termed the peptidyl transferase center (PTC), which catalyzes the formation of peptide bonds, thereby polymerizing the amino acids delivered by tRNAs into a polypeptide chain. The nascent polypeptides leave the ribosome through a tunnel in the LSU and interact with protein factors that function in enzymatic processing, targeting, and the membrane insertion of nascent chains at the exit of the ribosomal tunnel. This is Small ribosomal subunit protein eS1A (rps101) from Schizosaccharomyces pombe (strain 972 / ATCC 24843) (Fission yeast).